The chain runs to 867 residues: Nuclear cap-binding protein subunit 1 (867 aa).

The MIF4G domain occupies Leu9–Ser228. The disordered stretch occupies residues Ser752–Asn797. Residues Asp788–Asn797 show a composition bias toward polar residues.

The protein belongs to the NCBP1 family. Component of the nuclear cap-binding complex (CBC), a heterodimer composed of ABH1/CBP80 and CBP20 that interacts with m7GpppG-capped RNA.

The protein resides in the nucleus. It localises to the cytoplasm. Component of the cap-binding complex (CBC), which binds cotranscriptionally to the 5'-cap of pre-mRNAs and is involved in various processes such as pre-mRNA splicing and RNA-mediated gene silencing (RNAi) by microRNAs (miRNAs). The CBC complex is involved in miRNA-mediated RNA interference and is required for primary miRNA processing. In the CBC complex, ABH1/CBP80 does not bind directly capped RNAs (m7GpppG-capped RNA) but is required to stabilize the movement of the N-terminal loop of CBP20 and lock the CBC into a high affinity cap-binding state with the cap structure. The chain is Nuclear cap-binding protein subunit 1 (ABH1) from Oryza sativa subsp. japonica (Rice).